A 353-amino-acid chain; its full sequence is Quinolinate synthase (353 aa).

The iminosuccinate site is built by His-47 and Ser-68. Residue Cys-113 participates in [4Fe-4S] cluster binding. Residues 139–141 and Ser-156 each bind iminosuccinate; that span reads YAN. Cys-200 lines the [4Fe-4S] cluster pocket. Residues 226-228 and Thr-243 contribute to the iminosuccinate site; that span reads HPE. Cys-297 serves as a coordination point for [4Fe-4S] cluster.

Belongs to the quinolinate synthase family. Type 1 subfamily. It depends on [4Fe-4S] cluster as a cofactor.

The protein localises to the cytoplasm. The enzyme catalyses iminosuccinate + dihydroxyacetone phosphate = quinolinate + phosphate + 2 H2O + H(+). The protein operates within cofactor biosynthesis; NAD(+) biosynthesis; quinolinate from iminoaspartate: step 1/1. Functionally, catalyzes the condensation of iminoaspartate with dihydroxyacetone phosphate to form quinolinate. This Vibrio parahaemolyticus serotype O3:K6 (strain RIMD 2210633) protein is Quinolinate synthase.